Consider the following 230-residue polypeptide: Biosynthetic peptidoglycan transglycosylase (230 aa).

The helical transmembrane segment at 10-30 threads the bilayer; it reads IFLFFIAVIFVYQFWIFSQIV.

This sequence belongs to the glycosyltransferase 51 family.

The protein resides in the cell inner membrane. The catalysed reaction is [GlcNAc-(1-&gt;4)-Mur2Ac(oyl-L-Ala-gamma-D-Glu-L-Lys-D-Ala-D-Ala)](n)-di-trans,octa-cis-undecaprenyl diphosphate + beta-D-GlcNAc-(1-&gt;4)-Mur2Ac(oyl-L-Ala-gamma-D-Glu-L-Lys-D-Ala-D-Ala)-di-trans,octa-cis-undecaprenyl diphosphate = [GlcNAc-(1-&gt;4)-Mur2Ac(oyl-L-Ala-gamma-D-Glu-L-Lys-D-Ala-D-Ala)](n+1)-di-trans,octa-cis-undecaprenyl diphosphate + di-trans,octa-cis-undecaprenyl diphosphate + H(+). The protein operates within cell wall biogenesis; peptidoglycan biosynthesis. Peptidoglycan polymerase that catalyzes glycan chain elongation from lipid-linked precursors. This chain is Biosynthetic peptidoglycan transglycosylase, found in Nitrosospira multiformis (strain ATCC 25196 / NCIMB 11849 / C 71).